Reading from the N-terminus, the 144-residue chain is Granulocyte-macrophage colony-stimulating factor (144 aa).

Positions 1-17 are cleaved as a signal peptide; the sequence is MWLQGLLLLGTVACSIS. S24 carries O-linked (GalNAc...) serine glycosylation. T27 carries an O-linked (GalNAc...) threonine glycan. N44 and N54 each carry an N-linked (GlcNAc...) asparagine glycan. 2 disulfides stabilise this stretch: C71/C113 and C105/C138.

It belongs to the GM-CSF family. As to quaternary structure, monomer. The signaling GM-CSF receptor complex is a dodecamer of two head-to-head hexamers of two alpha, two beta, and two ligand subunits.

It localises to the secreted. Functionally, cytokine that stimulates the growth and differentiation of hematopoietic precursor cells from various lineages, including granulocytes, macrophages, eosinophils and erythrocytes. This chain is Granulocyte-macrophage colony-stimulating factor (CSF2), found in Chlorocebus aethiops (Green monkey).